The primary structure comprises 425 residues: TRAF family member-associated NF-kappa-B activator (425 aa).

At M1 the chain carries N-acetylmethionine. Residues M1 to Q31 form a necessary for interaction with ZC3H12A region. Positions D22–L62 form a coiled coil. Residues D70–E191 form a necessary for interaction with TRAF6 region. A phosphoserine mark is found at S126 and S129. Positions H133–A172 are interaction with TBK1 and IKBKE. The interval A172 to E191 is TRAF family member interaction. A phosphoserine mark is found at S178 and S208. At T213 the chain carries Phosphothreonine. Residues S225, S228, S341, S354, and S357 each carry the phosphoserine modification. The UBZ1-type zinc-finger motif lies at P393–H420. Residues C396, C399, H416, and H420 each contribute to the Zn(2+) site.

In terms of assembly, homodimer. Found in a deubiquitination complex with TANK, USP10 and ZC3H12A; this complex inhibits genotoxic stress- or interleukin-1-beta-mediated NF-kappaB activation by promoting IKBKG or TRAF6 deubiquitination. Interacts with IKBKG; this interaction increases in response to DNA damage. Interacts with TRAF6; this interaction increases in response to DNA damage and recruits USP10 to the ubiquitinated TRAF6. Interacts with USP10; this interaction increases in response to DNA damage. Interacts with ZC3H12A; this interaction increases in response to DNA damage. Interacts with TBK1. Interacts with IKBKE. Also interacts with TRAF1, TRAF2, and TRAF3 by binding to their TRAF-C domains; the interaction with TRAF2 is disrupted by the phosphorylation of TANK by IKBKE. Interacts more strongly with TRAF1 and TRAF2 than TRAF3. Interacts with IKBKG; the interaction is enhanced by IKBKE and TBK1. Part of a ternary complex consisting of TANK, IKBKB and IKBKG. (Microbial infection) Interacts with vaccinia virus protein C6. As to quaternary structure, (Microbial infection) Interacts with Seneca Valley virus protease 3C; this interaction allows the cleavage of TANK and subsequent suppression of host innate immunity. In terms of processing, phosphorylated by IKBKE. Post-translationally, (Microbial infection) Cleaved by encephalomyocarditis virus (EMCV) protease 3C. This cleavage allows the virus to disrupt the TANK-TBK1-IKKepsilon-IRF3 complex, thereby inhibiting the induction of the IFN-beta signal pathway. (Microbial infection) Cleaved by Seneca Valley virus protease 3C allowing the virus to suppress interferon type-I through both RIG-I and Toll-like receptor-dependent pathways. In terms of tissue distribution, ubiquitous.

Its subcellular location is the cytoplasm. In terms of biological role, adapter protein involved in I-kappa-B-kinase (IKK) regulation which constitutively binds TBK1 and IKBKE playing a role in antiviral innate immunity. Acts as a regulator of TRAF function by maintaining them in a latent state. Blocks TRAF2 binding to LMP1 and inhibits LMP1-mediated NF-kappa-B activation. Negatively regulates NF-kappaB signaling and cell survival upon DNA damage. Plays a role as an adapter to assemble ZC3H12A, USP10 in a deubiquitination complex which plays a negative feedback response to attenuate NF-kappaB activation through the deubiquitination of IKBKG or TRAF6 in response to interleukin-1-beta (IL1B) stimulation or upon DNA damage. Promotes UBP10-induced deubiquitination of TRAF6 in response to DNA damage. May control negatively TRAF2-mediated NF-kappa-B activation signaled by CD40, TNFR1 and TNFR2. The protein is TRAF family member-associated NF-kappa-B activator (TANK) of Homo sapiens (Human).